Consider the following 902-residue polypeptide: Probable polyribonucleotide nucleotidyltransferase 1, chloroplastic (902 aa).

The transit peptide at 1-66 (MLATPGALHH…RRRAAGARVR (66 aa)) directs the protein to the chloroplast. Positions 44 to 53 (VAASASTSRR) are enriched in low complexity. The disordered stretch occupies residues 44-93 (VAASASTSRRGGARRRAAGARVRASVGEEAPPVVTEEASTSGGPTKFSTK). The span at 80 to 91 (EASTSGGPTKFS) shows a compositional bias: polar residues. The 61-residue stretch at 693 to 753 (PLIHVMKVKP…SSLEKSKAII (61 aa)) folds into the KH domain. The 70-residue stretch at 763–832 (GEIYRNCEIK…DKGQLRLSSR (70 aa)) folds into the S1 motif domain. The interval 833–902 (ALLPDANQES…ASQGSEMGTE (70 aa)) is disordered. Over residues 839 to 850 (NQESSSKQQAGG) the composition is skewed to polar residues. The span at 852–862 (TREKAPQKDNL) shows a compositional bias: basic and acidic residues. Positions 877–888 (EASTAENNATAS) are enriched in low complexity.

Belongs to the polyribonucleotide nucleotidyltransferase family.

It is found in the plastid. The protein resides in the chloroplast. The catalysed reaction is RNA(n+1) + phosphate = RNA(n) + a ribonucleoside 5'-diphosphate. Its function is as follows. Involved in the metabolism of all major classes of plastid RNAs. Required for efficient 3'-end processing of mRNAs and 3'-end maturation of rRNA transcripts, but is not sufficient to mediate their degradation. Mediates tRNA degradation. May function as a poly(A) mRNA 3'-5' degrading phosphorylase. In Oryza sativa subsp. japonica (Rice), this protein is Probable polyribonucleotide nucleotidyltransferase 1, chloroplastic (PNP1).